The sequence spans 332 residues: D-alanine--D-alanine ligase (332 aa).

The segment covering 1 to 17 has biased composition (polar residues); sequence MPMTMTQSATNPTATPV. A disordered region spans residues 1–28; the sequence is MPMTMTQSATNPTATPVSANKASANAAT. Low complexity predominate over residues 18-28; sequence SANKASANAAT. The ATP-grasp domain occupies 132–329; it reads KQLWHGCGLS…FEQLCWHILA (198 aa). 158–213 contributes to the ATP binding site; that stretch reads VNTLGLPLIVKPVHEGSSIGMSKVNTLDELPKAYEVAAGCGDVVMAEKWITGREFT. Mg(2+) contacts are provided by Asp-283, Glu-296, and Asn-298.

It belongs to the D-alanine--D-alanine ligase family. The cofactor is Mg(2+). Mn(2+) serves as cofactor.

It is found in the cytoplasm. It carries out the reaction 2 D-alanine + ATP = D-alanyl-D-alanine + ADP + phosphate + H(+). It functions in the pathway cell wall biogenesis; peptidoglycan biosynthesis. In terms of biological role, cell wall formation. The protein is D-alanine--D-alanine ligase of Psychrobacter sp. (strain PRwf-1).